The sequence spans 1358 residues: Phosphoinositide 3-kinase regulatory subunit 4 (1358 aa).

Gly-2 is lipidated: N-myristoyl glycine. The Protein kinase domain maps to 26–324 (FEYDKSLGST…AFPEVFYTFL (299 aa)). Residues 32-40 (LGSTRFFKV) and Lys-53 each bind ATP. Catalysis depends on Asp-148, which acts as the Proton acceptor. HEAT repeat units lie at residues 413–450 (ILLD…LVQE), 458–495 (IYPE…TALR), 572–610 (KAND…YVGW), and 612–648 (SSSI…LGLL). A phosphoserine mark is found at Ser-808, Ser-813, Ser-853, and Ser-865. A disordered region spans residues 875 to 899 (LPKTSDHEVVPTGKSPRSESSAGVC). WD repeat units lie at residues 991–1030 (EHKS…GKTT), 1040–1079 (RIGG…LPKS), 1093–1134 (KEDG…NAWT), 1139–1178 (LKSG…PISS), 1182–1223 (PSRA…RRLT), and 1237–1278 (PSPH…RSYV). The segment at 1307-1326 (KQKVGPSDDTPRRGPESLPV) is disordered. Positions 1315–1326 (DTPRRGPESLPV) are enriched in basic and acidic residues. At Thr-1316 the chain carries Phosphothreonine. Residues 1327–1358 (GHHDIITDIATFQTTQGFIVTASRDGIVKVWK) form a WD 7 repeat.

It belongs to the protein kinase superfamily. Ser/Thr protein kinase family. In terms of assembly, component of the PI3K (PI3KC3/PI3K-III/class III phosphatidylinositol 3-kinase) complex the core of which is composed of the catalytic subunit PIK3C3, the regulatory subunit PIK3R4 and BECN1 associating with additional regulatory/auxiliary subunits to form alternative complex forms. Alternative complex forms containing a fourth regulatory subunit in a mutually exclusive manner are PI3K complex I (PI3KC3-C1) containing ATG14, and PI3K complex II (PI3KC3-C2) containing UVRAG. PI3KC3-C1 displays a V-shaped architecture with PIK3R4 serving as a bridge between PIK3C3 and the ATG14:BECN1 subcomplex. Both, PI3KC3-C1 and PI3KC3-C2, can associate with further regulatory subunits, such as RUBCN, SH3GLB1/Bif-1, AMBRA1 and NRBF2. PI3KC3-C1 probably associates with PIK3CB. Interacts with RAB7A in the presence of PIK3C3/VPS34. Interacts with NRBF2. Interacts with ARMC3. Requires Mn(2+) as cofactor. Post-translationally, myristoylated. Probably autophosphorylated.

The protein resides in the late endosome. Its subcellular location is the cytoplasmic vesicle. It is found in the autophagosome. It localises to the membrane. It catalyses the reaction L-seryl-[protein] + ATP = O-phospho-L-seryl-[protein] + ADP + H(+). The enzyme catalyses L-threonyl-[protein] + ATP = O-phospho-L-threonyl-[protein] + ADP + H(+). Regulatory subunit of the PI3K complex that mediates formation of phosphatidylinositol 3-phosphate; different complex forms are believed to play a role in multiple membrane trafficking pathways: PI3KC3-C1 is involved in initiation of autophagosomes and PI3KC3-C2 in maturation of autophagosomes and endocytosis. Involved in regulation of degradative endocytic trafficking and cytokinesis, probably in the context of PI3KC3-C2. The polypeptide is Phosphoinositide 3-kinase regulatory subunit 4 (Pik3r4) (Rattus norvegicus (Rat)).